The primary structure comprises 289 residues: Energy-coupling factor transporter ATP-binding protein EcfA2 (289 aa).

One can recognise an ABC transporter domain in the interval 3-246 (IQAKKLNYTY…PEWLKNHHLN (244 aa)). 40–47 (GHTGSGKS) contacts ATP.

The protein belongs to the ABC transporter superfamily. Energy-coupling factor EcfA family. Forms a stable energy-coupling factor (ECF) transporter complex composed of 2 membrane-embedded substrate-binding proteins (S component), 2 ATP-binding proteins (A component) and 2 transmembrane proteins (T component).

The protein localises to the cell membrane. Its function is as follows. ATP-binding (A) component of a common energy-coupling factor (ECF) ABC-transporter complex. Unlike classic ABC transporters this ECF transporter provides the energy necessary to transport a number of different substrates. The polypeptide is Energy-coupling factor transporter ATP-binding protein EcfA2 (Ligilactobacillus salivarius (strain UCC118) (Lactobacillus salivarius)).